A 402-amino-acid chain; its full sequence is Ferrochelatase, mitochondrial (402 aa).

A mitochondrion-targeting transit peptide spans 1 to 33; that stretch reads MAAAGRAARPLVAGGRQLRVPLRWRGQVAAAAP. Positions 94, 102, and 109 each coordinate protoporphyrin IX. Cys175 contacts [2Fe-2S] cluster. Active-site residues include His209 and Asp362. 3 residues coordinate [2Fe-2S] cluster: Cys382, Cys385, and Cys390.

The protein belongs to the ferrochelatase family. In terms of assembly, homodimer. Homotetramer. [2Fe-2S] cluster serves as cofactor.

The protein resides in the mitochondrion inner membrane. It catalyses the reaction heme b + 2 H(+) = protoporphyrin IX + Fe(2+). Its pathway is porphyrin-containing compound metabolism; protoheme biosynthesis; protoheme from protoporphyrin-IX: step 1/1. Its function is as follows. Catalyzes the ferrous insertion into protoporphyrin IX. This chain is Ferrochelatase, mitochondrial, found in Gallus gallus (Chicken).